The sequence spans 328 residues: tRNA uridine(34) hydroxylase (328 aa).

One can recognise a Rhodanese domain in the interval 130–224 (LDKDTVVLDT…YGKDPEVQGE (95 aa)). Cys-184 serves as the catalytic Cysteine persulfide intermediate.

The protein belongs to the TrhO family.

It carries out the reaction uridine(34) in tRNA + AH2 + O2 = 5-hydroxyuridine(34) in tRNA + A + H2O. Catalyzes oxygen-dependent 5-hydroxyuridine (ho5U) modification at position 34 in tRNAs. The protein is tRNA uridine(34) hydroxylase of Streptococcus pneumoniae (strain Hungary19A-6).